The primary structure comprises 802 residues: Chondroitin sulfate synthase 1 (802 aa).

Over 1 to 7 (MAARGRR) the chain is Cytoplasmic. Residues 8 to 28 (AWLSVLLGLVLGFVLASRLVL) form a helical; Signal-anchor for type II membrane protein membrane-spanning segment. Residues 29–802 (PRASELKRAG…SNNNGSVRTA (774 aa)) lie on the Lumenal side of the membrane. The interval 34–82 (LKRAGPRRRASPEGCRSGQAAASQAGGARGDARGAQLWPPGSDPDGGPR) is disordered. Low complexity-rich tracts occupy residues 49–59 (RSGQAAASQAG) and 66–78 (RGAQLWPPGSDPD). Residues Asn-189 and Asn-623 are each glycosylated (N-linked (GlcNAc...) asparagine). Residues Asp-633 and His-747 each coordinate a divalent metal cation. Asn-796 is a glycosylation site (N-linked (GlcNAc...) asparagine).

This sequence belongs to the chondroitin N-acetylgalactosaminyltransferase family. Requires Co(2+) as cofactor. It depends on Mn(2+) as a cofactor. Cd(2+) serves as cofactor. As to expression, ubiquitous, with the highest levels in placenta. Detected at low levels in brain, heart, skeletal muscle, colon, thymus, spleen, kidney, liver, adrenal gland, mammary gland, stomach, small intestine, lung and peripheral blood leukocytes.

The protein resides in the golgi apparatus. It is found in the golgi stack membrane. It localises to the secreted. It catalyses the reaction 3-O-(beta-D-GlcA-(1-&gt;3)-beta-D-GalNAc-(1-&gt;4)-beta-D-GlcA-(1-&gt;3)-beta-D-Gal-(1-&gt;3)-beta-D-Gal-(1-&gt;4)-beta-D-Xyl)-L-seryl-[protein] + UDP-N-acetyl-alpha-D-galactosamine = 3-O-(beta-D-GalNAc-(1-&gt;4)-beta-D-GlcA-(1-&gt;3)-beta-D-GalNAc-(1-&gt;4)-beta-D-GlcA-(1-&gt;3)-beta-D-Gal-(1-&gt;3)-beta-D-Gal-(1-&gt;4)-beta-D-Xyl)-L-seryl-[protein] + UDP + H(+). The catalysed reaction is 3-O-{beta-D-GlcA-(1-&gt;3)-[beta-D-GalNAc-(1-&gt;4)-beta-D-GlcA-(1-&gt;3)](n)-beta-D-GalNAc-(1-&gt;4)-beta-D-GlcA-(1-&gt;3)-beta-D-Gal-(1-&gt;3)-beta-D-Gal-(1-&gt;4)-beta-D-Xyl}-L-seryl-[protein] + UDP-N-acetyl-alpha-D-galactosamine = 3-O-{[beta-D-GalNAc-(1-&gt;4)-beta-D-GlcA-(1-&gt;3)](n+1)-beta-D-GalNAc-(1-&gt;4)-beta-D-GlcA-(1-&gt;3)-beta-D-Gal-(1-&gt;3)-beta-D-Gal-(1-&gt;4)-beta-D-Xyl}-L-seryl-[protein] + UDP + H(+). It carries out the reaction 3-O-(beta-D-GalNAc-(1-&gt;4)-beta-D-GlcA-(1-&gt;3)-beta-D-Gal-(1-&gt;3)-beta-D-Gal-(1-&gt;4)-beta-D-Xyl)-L-seryl-[protein] + UDP-alpha-D-glucuronate = 3-O-(beta-D-GlcA-(1-&gt;3)-beta-D-GalNAc-(1-&gt;4)-beta-D-GlcA-(1-&gt;3)-beta-D-Gal-(1-&gt;3)-beta-D-Gal-(1-&gt;4)-beta-D-Xyl)-L-seryl-[protein] + UDP + H(+). The enzyme catalyses 3-O-{[beta-D-GalNAc-(1-&gt;4)-beta-D-GlcA-(1-&gt;3)](n)-beta-D-GalNAc-(1-&gt;4)-beta-D-GlcA-(1-&gt;3)-beta-D-Gal-(1-&gt;3)-beta-D-Gal-(1-&gt;4)-beta-D-Xyl}-L-seryl-[protein] + UDP-alpha-D-glucuronate = 3-O-{beta-D-GlcA-(1-&gt;3)-[beta-D-GalNAc-(1-&gt;4)-beta-D-GlcA-(1-&gt;3)](n)-beta-D-GalNAc-(1-&gt;4)-beta-D-GlcA-(1-&gt;3)-beta-D-Gal-(1-&gt;3)-beta-D-Gal-(1-&gt;4)-beta-D-Xyl}-L-seryl-[protein] + UDP + H(+). Its function is as follows. Has both beta-1,3-glucuronic acid and beta-1,4-N-acetylgalactosamine transferase activity. Transfers glucuronic acid (GlcUA) from UDP-GlcUA and N-acetylgalactosamine (GalNAc) from UDP-GalNAc to the non-reducing end of the elongating chondroitin polymer. Involved in the negative control of osteogenesis likely through the modulation of NOTCH signaling. In Homo sapiens (Human), this protein is Chondroitin sulfate synthase 1.